A 506-amino-acid polypeptide reads, in one-letter code: Maturase K (506 aa).

It belongs to the intron maturase 2 family. MatK subfamily.

It localises to the plastid. Its subcellular location is the chloroplast. Usually encoded in the trnK tRNA gene intron. Probably assists in splicing its own and other chloroplast group II introns. This chain is Maturase K, found in Wisteria frutescens (American wisteria).